Reading from the N-terminus, the 313-residue chain is DNA-directed RNA polymerase subunit alpha (313 aa).

Positions 1-226 are alpha N-terminal domain (alpha-NTD); that stretch reads MLEIEKPKIE…EHMRLFLGLT (226 aa). The interval 242–313 is alpha C-terminal domain (alpha-CTD); sequence TRDRLMDMSI…LGLSLRSSEE (72 aa).

Belongs to the RNA polymerase alpha chain family. As to quaternary structure, homodimer. The RNAP catalytic core consists of 2 alpha, 1 beta, 1 beta' and 1 omega subunit. When a sigma factor is associated with the core the holoenzyme is formed, which can initiate transcription.

The enzyme catalyses RNA(n) + a ribonucleoside 5'-triphosphate = RNA(n+1) + diphosphate. In terms of biological role, DNA-dependent RNA polymerase catalyzes the transcription of DNA into RNA using the four ribonucleoside triphosphates as substrates. This is DNA-directed RNA polymerase subunit alpha from Moorella thermoacetica (strain ATCC 39073 / JCM 9320).